A 162-amino-acid polypeptide reads, in one-letter code: Large ribosomal subunit protein uL10 (162 aa).

This sequence belongs to the universal ribosomal protein uL10 family. In terms of assembly, part of the ribosomal stalk of the 50S ribosomal subunit. The N-terminus interacts with L11 and the large rRNA to form the base of the stalk. The C-terminus forms an elongated spine to which L12 dimers bind in a sequential fashion forming a multimeric L10(L12)X complex.

Its function is as follows. Forms part of the ribosomal stalk, playing a central role in the interaction of the ribosome with GTP-bound translation factors. This is Large ribosomal subunit protein uL10 from Vibrio parahaemolyticus serotype O3:K6 (strain RIMD 2210633).